A 461-amino-acid chain; its full sequence is Homogentisate 1,2-dioxygenase (461 aa).

Fe cation contacts are provided by H341, E347, and H377.

This sequence belongs to the homogentisate dioxygenase family. It depends on Fe cation as a cofactor.

The catalysed reaction is homogentisate + O2 = 4-maleylacetoacetate + H(+). It participates in amino-acid degradation; L-phenylalanine degradation; acetoacetate and fumarate from L-phenylalanine: step 4/6. In Arabidopsis thaliana (Mouse-ear cress), this protein is Homogentisate 1,2-dioxygenase (HGO).